We begin with the raw amino-acid sequence, 48 residues long: Small, acid-soluble spore protein G (48 aa).

A compositionally biased stretch (basic and acidic residues) spans 1–16; the sequence is MSENRHENEENRRDAA. Residues 1-48 form a disordered region; it reads MSENRHENEENRRDAAVAKVQNSGNAKVVVSVNTDQDQAQAQSQDGED. Low complexity predominate over residues 35–48; the sequence is DQDQAQAQSQDGED.

This is Small, acid-soluble spore protein G (sspG) from Bacillus subtilis (strain 168).